The primary structure comprises 325 residues: Holliday junction branch migration complex subunit RuvB (325 aa).

A large ATPase domain (RuvB-L) region spans residues 1 to 180 (MKNQLLDAKV…FGIHLKLNFY (180 aa)). Residues Leu19, Arg20, Gly61, Lys64, Thr65, Ser66, 127–129 (EDF), Arg170, Tyr180, and Arg217 contribute to the ATP site. A Mg(2+)-binding site is contributed by Thr65. A small ATPAse domain (RuvB-S) region spans residues 181 to 251 (SCEELTQIVE…ITDYALNQLG (71 aa)). The tract at residues 254 to 325 (KLGLDSSDHK…ITANALKHLH (72 aa)) is head domain (RuvB-H). The DNA site is built by Arg290, Arg309, and Arg314.

Belongs to the RuvB family. As to quaternary structure, homohexamer. Forms an RuvA(8)-RuvB(12)-Holliday junction (HJ) complex. HJ DNA is sandwiched between 2 RuvA tetramers; dsDNA enters through RuvA and exits via RuvB. An RuvB hexamer assembles on each DNA strand where it exits the tetramer. Each RuvB hexamer is contacted by two RuvA subunits (via domain III) on 2 adjacent RuvB subunits; this complex drives branch migration. In the full resolvosome a probable DNA-RuvA(4)-RuvB(12)-RuvC(2) complex forms which resolves the HJ.

The protein localises to the cytoplasm. It catalyses the reaction ATP + H2O = ADP + phosphate + H(+). Functionally, the RuvA-RuvB-RuvC complex processes Holliday junction (HJ) DNA during genetic recombination and DNA repair, while the RuvA-RuvB complex plays an important role in the rescue of blocked DNA replication forks via replication fork reversal (RFR). RuvA specifically binds to HJ cruciform DNA, conferring on it an open structure. The RuvB hexamer acts as an ATP-dependent pump, pulling dsDNA into and through the RuvAB complex. RuvB forms 2 homohexamers on either side of HJ DNA bound by 1 or 2 RuvA tetramers; 4 subunits per hexamer contact DNA at a time. Coordinated motions by a converter formed by DNA-disengaged RuvB subunits stimulates ATP hydrolysis and nucleotide exchange. Immobilization of the converter enables RuvB to convert the ATP-contained energy into a lever motion, pulling 2 nucleotides of DNA out of the RuvA tetramer per ATP hydrolyzed, thus driving DNA branch migration. The RuvB motors rotate together with the DNA substrate, which together with the progressing nucleotide cycle form the mechanistic basis for DNA recombination by continuous HJ branch migration. Branch migration allows RuvC to scan DNA until it finds its consensus sequence, where it cleaves and resolves cruciform DNA. This Orientia tsutsugamushi (strain Boryong) (Rickettsia tsutsugamushi) protein is Holliday junction branch migration complex subunit RuvB.